The chain runs to 835 residues: Axin-1 (835 aa).

Residues 16 to 60 are disordered; it reads LGSSFTEDAPRPPVPGEEGDLVSSDGRQYNHSFYSSKSDSLKNEA. Positions 40 to 53 are enriched in polar residues; it reads DGRQYNHSFYSSKS. The 123-residue stretch at 92 to 214 folds into the RGS domain; that stretch reads SLHSLLDDQD…LKSDIYLEYT (123 aa). Residues 318–349 are disordered; sequence ATSANDSEQQSMSSDADTLSLTDSSVDGVPPY. A compositionally biased stretch (low complexity) spans 328–344; sequence SMSSDADTLSLTDSSVD. The interval 351–436 is interaction with GSK3B; it reads YRKPHRREIH…DADISTGPSL (86 aa). The interaction with beta-catenin stretch occupies residues 437–512; the sequence is ANHRVPPAVH…SPDGLPAGKI (76 aa). Disordered regions lie at residues 485–530 and 602–627; these read KTPG…QARQ and GYSS…FEMR. A compositionally biased stretch (basic and acidic residues) spans 616-627; it reads RKGEDGRNFEMR. The region spanning 753–835 is the DIX domain; sequence CENITVAYYF…KIIGKVEKVD (83 aa).

In terms of assembly, homodimer. Interacts with dixdc1. Interacts with hwa; leading to promote the tankyrase-mediated degradation of axin1. ADP-ribosylated by tankyrase tnks and tnks2. Poly-ADP-ribosylated protein is recognized by rnf146, followed by ubiquitination at 'Lys-48' and subsequent activation of the Wnt signaling pathway. Post-translationally, ubiquitinated by rnf146 when poly-ADP-ribosylated, leading to its degradation and subsequent activation of the Wnt signaling pathway.

Its subcellular location is the cytoplasm. It is found in the nucleus. The protein localises to the membrane. It localises to the cell membrane. In terms of biological role, component of the beta-catenin destruction complex required for regulating ctnnb1 levels through phosphorylation and ubiquitination, and modulating Wnt-signaling. Controls dorsoventral patterning via two opposing effects: down-regulates ctnnb1 to inhibit the Wnt signaling pathway and ventralize embryos, but also dorsalizes embryos by activating a Wnt-independent JNK signaling pathway. This is Axin-1 (axin1) from Danio rerio (Zebrafish).